A 126-amino-acid polypeptide reads, in one-letter code: UPF0102 protein PMT_0624 (126 aa).

This sequence belongs to the UPF0102 family.

This Prochlorococcus marinus (strain MIT 9313) protein is UPF0102 protein PMT_0624.